The following is a 169-amino-acid chain: MKYGIVLFPSKKLQDIANSYRKRYDPNYALIPPHLTLRTPFEVSEDEISGVVRHLRELSKELKPVTLKITKFSSFAPVNNVIYMKAEPTEELMQLHEKMYSGVLEDKPEYAFVPHVTVAQKLSDDEHSDVLGTLKMRDASHEEVIDRFHLLYQLDNGSWTVYETFILGA.

His-34 acts as the Proton donor in catalysis. Short sequence motifs (HXTX) lie at residues 34–37 and 115–118; these read HLTL and HVTV. His-115 (proton acceptor) is an active-site residue.

The protein belongs to the 2H phosphoesterase superfamily. YjcG family.

This is Putative phosphoesterase BLi01284/BL02661 from Bacillus licheniformis (strain ATCC 14580 / DSM 13 / JCM 2505 / CCUG 7422 / NBRC 12200 / NCIMB 9375 / NCTC 10341 / NRRL NRS-1264 / Gibson 46).